A 211-amino-acid chain; its full sequence is uncharacterized protein (211 aa).

Disordered regions lie at residues 45-74 (RSCG…GALS) and 147-211 (AETR…WEEP). Over residues 48-71 (GRSSTGGCSPCSGPGPSSPRTSRG) the composition is skewed to low complexity. Residues 195–205 (DSGSIKMSENE) show a composition bias toward polar residues.

This is an uncharacterized protein from Homo sapiens (Human).